The primary structure comprises 232 residues: Imidazole glycerol phosphate synthase subunit HisF (232 aa).

Catalysis depends on residues Asp-11 and Asp-130.

Belongs to the HisA/HisF family. As to quaternary structure, heterodimer of HisH and HisF.

The protein resides in the cytoplasm. The catalysed reaction is 5-[(5-phospho-1-deoxy-D-ribulos-1-ylimino)methylamino]-1-(5-phospho-beta-D-ribosyl)imidazole-4-carboxamide + L-glutamine = D-erythro-1-(imidazol-4-yl)glycerol 3-phosphate + 5-amino-1-(5-phospho-beta-D-ribosyl)imidazole-4-carboxamide + L-glutamate + H(+). It functions in the pathway amino-acid biosynthesis; L-histidine biosynthesis; L-histidine from 5-phospho-alpha-D-ribose 1-diphosphate: step 5/9. Functionally, IGPS catalyzes the conversion of PRFAR and glutamine to IGP, AICAR and glutamate. The HisF subunit catalyzes the cyclization activity that produces IGP and AICAR from PRFAR using the ammonia provided by the HisH subunit. This chain is Imidazole glycerol phosphate synthase subunit HisF, found in Listeria monocytogenes serotype 4a (strain HCC23).